A 497-amino-acid chain; its full sequence is Glycerol kinase (497 aa).

Threonine 12 is an ADP binding site. Positions 12, 13, and 14 each coordinate ATP. Threonine 12 contributes to the sn-glycerol 3-phosphate binding site. Position 16 (arginine 16) interacts with ADP. 4 residues coordinate sn-glycerol 3-phosphate: arginine 82, glutamate 83, tyrosine 133, and aspartate 243. Residues arginine 82, glutamate 83, tyrosine 133, aspartate 243, and glutamine 244 each contribute to the glycerol site. Residues threonine 265 and glycine 308 each coordinate ADP. ATP is bound by residues threonine 265, glycine 308, glutamine 312, and glycine 409. Glycine 409 is a binding site for ADP.

It belongs to the FGGY kinase family.

The catalysed reaction is glycerol + ATP = sn-glycerol 3-phosphate + ADP + H(+). It functions in the pathway polyol metabolism; glycerol degradation via glycerol kinase pathway; sn-glycerol 3-phosphate from glycerol: step 1/1. Its activity is regulated as follows. Inhibited by fructose 1,6-bisphosphate (FBP). In terms of biological role, key enzyme in the regulation of glycerol uptake and metabolism. Catalyzes the phosphorylation of glycerol to yield sn-glycerol 3-phosphate. The protein is Glycerol kinase of Dichelobacter nodosus (strain VCS1703A).